The following is a 130-amino-acid chain: Small ribosomal subunit protein uS8 (130 aa).

The protein belongs to the universal ribosomal protein uS8 family. Part of the 30S ribosomal subunit. Contacts proteins S5 and S12.

Its function is as follows. One of the primary rRNA binding proteins, it binds directly to 16S rRNA central domain where it helps coordinate assembly of the platform of the 30S subunit. This is Small ribosomal subunit protein uS8 from Teredinibacter turnerae (strain ATCC 39867 / T7901).